Reading from the N-terminus, the 187-residue chain is Adenine phosphoribosyltransferase (187 aa).

The protein belongs to the purine/pyrimidine phosphoribosyltransferase family. Homodimer.

The protein resides in the cytoplasm. It carries out the reaction AMP + diphosphate = 5-phospho-alpha-D-ribose 1-diphosphate + adenine. Its pathway is purine metabolism; AMP biosynthesis via salvage pathway; AMP from adenine: step 1/1. Its function is as follows. Catalyzes a salvage reaction resulting in the formation of AMP, that is energically less costly than de novo synthesis. This is Adenine phosphoribosyltransferase from Yersinia pestis (strain Pestoides F).